Reading from the N-terminus, the 219-residue chain is Orotate phosphoribosyltransferase (219 aa).

5-phospho-alpha-D-ribose 1-diphosphate is bound at residue lysine 26. Residue 34–35 (FF) participates in orotate binding. Residues 72–73 (YK), arginine 98, lysine 99, lysine 102, histidine 104, and 124–132 (DDVITAGTA) contribute to the 5-phospho-alpha-D-ribose 1-diphosphate site. The orotate site is built by threonine 128 and arginine 156.

Belongs to the purine/pyrimidine phosphoribosyltransferase family. PyrE subfamily. In terms of assembly, homodimer. Mg(2+) serves as cofactor.

It catalyses the reaction orotidine 5'-phosphate + diphosphate = orotate + 5-phospho-alpha-D-ribose 1-diphosphate. It participates in pyrimidine metabolism; UMP biosynthesis via de novo pathway; UMP from orotate: step 1/2. Functionally, catalyzes the transfer of a ribosyl phosphate group from 5-phosphoribose 1-diphosphate to orotate, leading to the formation of orotidine monophosphate (OMP). The chain is Orotate phosphoribosyltransferase from Stenotrophomonas maltophilia (strain K279a).